Reading from the N-terminus, the 355-residue chain is Inositol-tetrakisphosphate 1-kinase 4 (355 aa).

Lys65 contacts 1D-myo-inositol 1,3,4-trisphosphate. Positions 101 and 146 each coordinate ATP. One can recognise an ATP-grasp domain in the interval 107–318 (VVSGLRTPVS…FFLEMLRGTR (212 aa)). The 1D-myo-inositol 1,3,4-trisphosphate site is built by His157 and Lys190. ATP contacts are provided by residues 179 to 190 (QEFVNHGGVLFK) and Ser205. The segment at 225-248 (FANISNQPLPPPDDDGGAADDDTP) is disordered. Residues 236–247 (PDDDGGAADDDT) show a composition bias toward acidic residues. The Mg(2+) site is built by Asp272, Asp289, and Asn291. Asn291 lines the 1D-myo-inositol 1,3,4-trisphosphate pocket.

It belongs to the ITPK1 family. As to quaternary structure, monomer. Requires Mg(2+) as cofactor.

The enzyme catalyses 1D-myo-inositol 3,4,5,6-tetrakisphosphate + ATP = 1D-myo-inositol 1,3,4,5,6-pentakisphosphate + ADP + H(+). It carries out the reaction 1D-myo-inositol 1,3,4-trisphosphate + ATP = 1D-myo-inositol 1,3,4,5-tetrakisphosphate + ADP + H(+). It catalyses the reaction 1D-myo-inositol 1,3,4-trisphosphate + ATP = 1D-myo-inositol 1,3,4,6-tetrakisphosphate + ADP + H(+). Its function is as follows. Kinase that can phosphorylate various inositol polyphosphate such as Ins(3,4,5,6)P4 or Ins(1,3,4)P3 and participates in phytic acid biosynthesis in developing seeds. Phytic acid is the primary storage form of phosphorus in cereal grains and other plant seeds. The sequence is that of Inositol-tetrakisphosphate 1-kinase 4 (ITPK4) from Oryza sativa subsp. indica (Rice).